The following is an 80-amino-acid chain: Cell division protein ZapB (80 aa).

Residues 3–80 (FEVLEKLEAK…ALLGKMEDVE (78 aa)) are a coiled coil.

Belongs to the ZapB family. In terms of assembly, homodimer. The ends of the coiled-coil dimer bind to each other, forming polymers. Interacts with FtsZ.

The protein localises to the cytoplasm. Functionally, non-essential, abundant cell division factor that is required for proper Z-ring formation. It is recruited early to the divisome by direct interaction with FtsZ, stimulating Z-ring assembly and thereby promoting cell division earlier in the cell cycle. Its recruitment to the Z-ring requires functional FtsA or ZipA. The protein is Cell division protein ZapB of Vibrio vulnificus (strain CMCP6).